We begin with the raw amino-acid sequence, 89 residues long: Small ribosomal subunit protein uS15 (89 aa).

Belongs to the universal ribosomal protein uS15 family. As to quaternary structure, part of the 30S ribosomal subunit. Forms a bridge to the 50S subunit in the 70S ribosome, contacting the 23S rRNA.

Functionally, one of the primary rRNA binding proteins, it binds directly to 16S rRNA where it helps nucleate assembly of the platform of the 30S subunit by binding and bridging several RNA helices of the 16S rRNA. Its function is as follows. Forms an intersubunit bridge (bridge B4) with the 23S rRNA of the 50S subunit in the ribosome. In Pseudomonas putida (strain GB-1), this protein is Small ribosomal subunit protein uS15.